Here is a 160-residue protein sequence, read N- to C-terminus: Large ribosomal subunit protein uL22c (160 aa).

Belongs to the universal ribosomal protein uL22 family. Part of the 50S ribosomal subunit.

It is found in the plastid. The protein resides in the chloroplast. This protein binds specifically to 23S rRNA. In terms of biological role, the globular domain of the protein is located near the polypeptide exit tunnel on the outside of the subunit, while an extended beta-hairpin is found that lines the wall of the exit tunnel in the center of the 70S ribosome. The polypeptide is Large ribosomal subunit protein uL22c (rpl22) (Draba nemorosa (Woodland whitlowgrass)).